The primary structure comprises 146 residues: Protein translocase subunit SecE (146 aa).

Positions 1 to 81 (MSDERYAASD…KVKKPKKSAD (81 aa)) are disordered. A compositionally biased stretch (gly residues) spans 10–20 (DGGGTEVGSGT). Polar residues predominate over residues 45–54 (RAANASNTGA). The span at 69–81 (KEGKVKKPKKSAD) shows a compositional bias: basic and acidic residues. The helical transmembrane segment at 118–138 (VVLAFLAFMVALVGLADFGLA) threads the bilayer.

The protein belongs to the SecE/SEC61-gamma family. In terms of assembly, component of the Sec protein translocase complex. Heterotrimer consisting of SecY, SecE and SecG subunits. The heterotrimers can form oligomers, although 1 heterotrimer is thought to be able to translocate proteins. Interacts with the ribosome. Interacts with SecDF, and other proteins may be involved. Interacts with SecA.

It localises to the cell membrane. Its function is as follows. Essential subunit of the Sec protein translocation channel SecYEG. Clamps together the 2 halves of SecY. May contact the channel plug during translocation. This chain is Protein translocase subunit SecE, found in Mycobacterium leprae (strain TN).